We begin with the raw amino-acid sequence, 300 residues long: Porphobilinogen deaminase (300 aa).

Cysteine 239 is subject to S-(dipyrrolylmethanemethyl)cysteine.

Belongs to the HMBS family. Monomer. Requires dipyrromethane as cofactor.

It carries out the reaction 4 porphobilinogen + H2O = hydroxymethylbilane + 4 NH4(+). It functions in the pathway porphyrin-containing compound metabolism; protoporphyrin-IX biosynthesis; coproporphyrinogen-III from 5-aminolevulinate: step 2/4. Its function is as follows. Tetrapolymerization of the monopyrrole PBG into the hydroxymethylbilane pre-uroporphyrinogen in several discrete steps. The chain is Porphobilinogen deaminase from Francisella tularensis subsp. tularensis (strain FSC 198).